Consider the following 226-residue polypeptide: Enolase-phosphatase E1 (226 aa).

Belongs to the HAD-like hydrolase superfamily. MasA/MtnC family. In terms of assembly, monomer. It depends on Mg(2+) as a cofactor.

The enzyme catalyses 5-methylsulfanyl-2,3-dioxopentyl phosphate + H2O = 1,2-dihydroxy-5-(methylsulfanyl)pent-1-en-3-one + phosphate. The protein operates within amino-acid biosynthesis; L-methionine biosynthesis via salvage pathway; L-methionine from S-methyl-5-thio-alpha-D-ribose 1-phosphate: step 3/6. It participates in amino-acid biosynthesis; L-methionine biosynthesis via salvage pathway; L-methionine from S-methyl-5-thio-alpha-D-ribose 1-phosphate: step 4/6. Bifunctional enzyme that catalyzes the enolization of 2,3-diketo-5-methylthiopentyl-1-phosphate (DK-MTP-1-P) into the intermediate 2-hydroxy-3-keto-5-methylthiopentenyl-1-phosphate (HK-MTPenyl-1-P), which is then dephosphorylated to form the acireductone 1,2-dihydroxy-3-keto-5-methylthiopentene (DHK-MTPene). The chain is Enolase-phosphatase E1 from Alcanivorax borkumensis (strain ATCC 700651 / DSM 11573 / NCIMB 13689 / SK2).